Reading from the N-terminus, the 461-residue chain is Phosphoglycerate kinase, chloroplastic (461 aa).

Residues 1 to 60 constitute a chloroplast transit peptide; that stretch reads MALSMKMRANARVSGRRVAAVAPRVVPFSSASSSVLRSGFALRCLWTSAAWAALASVVEA. (2R)-3-phosphoglycerate contacts are provided by A82, D83, N85, R100, S122, H123, G125, R126, R182, H214, and R215. Position 260 (G260) interacts with ADP. Residue G260 participates in CDP binding. AMP contacts are provided by K262 and K266. K266 provides a ligand contact to ATP. G284 lines the ADP pocket. Residue G284 participates in CDP binding. The AMP site is built by G285 and G357. ATP contacts are provided by G285 and G357. Residues G382 and F387 each coordinate CDP. F387 is an ADP binding site. Position 388 (E388) interacts with AMP. ATP-binding residues include E388, D419, and S420. A Mg(2+)-binding site is contributed by D419.

It belongs to the phosphoglycerate kinase family. Monomer. Mg(2+) is required as a cofactor.

Its subcellular location is the plastid. It is found in the chloroplast. The catalysed reaction is (2R)-3-phosphoglycerate + ATP = (2R)-3-phospho-glyceroyl phosphate + ADP. It participates in carbohydrate biosynthesis; Calvin cycle. The polypeptide is Phosphoglycerate kinase, chloroplastic (Chlamydomonas reinhardtii (Chlamydomonas smithii)).